Reading from the N-terminus, the 1243-residue chain is ATP-dependent helicase/nuclease subunit A (1243 aa).

The region spanning V2 to R475 is the UvrD-like helicase ATP-binding domain. Residue A23–T30 coordinates ATP. Residues A502–G803 enclose the UvrD-like helicase C-terminal domain.

It belongs to the helicase family. AddA subfamily. As to quaternary structure, heterodimer of AddA and AddB/RexB. Mg(2+) is required as a cofactor.

The catalysed reaction is Couples ATP hydrolysis with the unwinding of duplex DNA by translocating in the 3'-5' direction.. It catalyses the reaction ATP + H2O = ADP + phosphate + H(+). Its function is as follows. The heterodimer acts as both an ATP-dependent DNA helicase and an ATP-dependent, dual-direction single-stranded exonuclease. Recognizes the chi site generating a DNA molecule suitable for the initiation of homologous recombination. The AddA nuclease domain is required for chi fragment generation; this subunit has the helicase and 3' -&gt; 5' nuclease activities. In Oceanobacillus iheyensis (strain DSM 14371 / CIP 107618 / JCM 11309 / KCTC 3954 / HTE831), this protein is ATP-dependent helicase/nuclease subunit A.